The sequence spans 295 residues: Light-independent protochlorophyllide reductase iron-sulfur ATP-binding protein (295 aa).

ATP-binding positions include 39 to 44 (GIGKST) and lysine 68. A Mg(2+)-binding site is contributed by serine 43. Positions 124 and 158 each coordinate [4Fe-4S] cluster. 209–210 (NR) contributes to the ATP binding site.

Belongs to the NifH/BchL/ChlL family. As to quaternary structure, homodimer. Protochlorophyllide reductase is composed of three subunits; ChlL, ChlN and ChlB. It depends on [4Fe-4S] cluster as a cofactor.

It catalyses the reaction chlorophyllide a + oxidized 2[4Fe-4S]-[ferredoxin] + 2 ADP + 2 phosphate = protochlorophyllide a + reduced 2[4Fe-4S]-[ferredoxin] + 2 ATP + 2 H2O. Its pathway is porphyrin-containing compound metabolism; chlorophyll biosynthesis (light-independent). In terms of biological role, component of the dark-operative protochlorophyllide reductase (DPOR) that uses Mg-ATP and reduced ferredoxin to reduce ring D of protochlorophyllide (Pchlide) to form chlorophyllide a (Chlide). This reaction is light-independent. The L component serves as a unique electron donor to the NB-component of the complex, and binds Mg-ATP. This is Light-independent protochlorophyllide reductase iron-sulfur ATP-binding protein from Prochlorococcus marinus (strain MIT 9301).